A 63-amino-acid chain; its full sequence is Putative antitoxin AF_1084 (63 aa).

It belongs to the UPF0165 family.

In terms of biological role, possibly the antitoxin component of a type II toxin-antitoxin (TA) system. In Archaeoglobus fulgidus (strain ATCC 49558 / DSM 4304 / JCM 9628 / NBRC 100126 / VC-16), this protein is Putative antitoxin AF_1084.